The following is a 359-amino-acid chain: tRNA-specific 2-thiouridylase MnmA (359 aa).

ATP contacts are provided by residues 10–17 (GISGGVDS) and Leu36. The Nucleophile role is filled by Cys101. Cys101 and Cys197 are joined by a disulfide. Gly125 provides a ligand contact to ATP. The interaction with tRNA stretch occupies residues 147 to 149 (KDQ). Residue Cys197 is the Cysteine persulfide intermediate of the active site. Residues 306 to 307 (RY) are interaction with tRNA.

It belongs to the MnmA/TRMU family.

It is found in the cytoplasm. The catalysed reaction is S-sulfanyl-L-cysteinyl-[protein] + uridine(34) in tRNA + AH2 + ATP = 2-thiouridine(34) in tRNA + L-cysteinyl-[protein] + A + AMP + diphosphate + H(+). Functionally, catalyzes the 2-thiolation of uridine at the wobble position (U34) of tRNA, leading to the formation of s(2)U34. This Chlorobium chlorochromatii (strain CaD3) protein is tRNA-specific 2-thiouridylase MnmA.